The sequence spans 587 residues: Arginine--tRNA ligase (587 aa).

Positions 127–137 match the 'HIGH' region motif; sequence PNLAKEMHVGH.

It belongs to the class-I aminoacyl-tRNA synthetase family. Monomer.

It is found in the cytoplasm. It carries out the reaction tRNA(Arg) + L-arginine + ATP = L-arginyl-tRNA(Arg) + AMP + diphosphate. The protein is Arginine--tRNA ligase of Pseudomonas paraeruginosa (strain DSM 24068 / PA7) (Pseudomonas aeruginosa (strain PA7)).